The chain runs to 711 residues: MAQSSLVAAAGRSGRVIGDYAVGRQIGSGSFSVVWEGRHLVHGTVVAIKEIAMARLNKKLQESLMSEIIILRKINHPNIIRFIDMIEAPGKINLVLEYCKGGDLSMYIHKHGSVPEATAKHFMLQLAAGLQVLRDNNIIHRDLKPQNLLLSTDDNDAALKIADFGFARSLQPRGLAETLCGSPLYMAPEIMQLQKYDAKADLWSVGAILFQLVTGRTPFTGNSQIQLLQNIIRSTELHFPADCRDLSTDCKDLCQKLLRRNPVERLTFEEFFHHPFLSDKQSYDFTRSRLDSRTMNDFHSSGSSPSRNIEEISQEDGLPFFLDDDSSGPEGSPSSFKHTSPMKSSYGFSVERREAALSPLKNMDLSSRYSRVSHRAETNNFKFEGHRLSDRSQFKPSSLPDSRSFSTQGRGDSPDSMDQDYVLISGPPVDIPSSSSGSPKPFNYPFKSHSPPVEFIKRNVTNLTAPMPIASATGNNLSRFGSLESQNCIPGTSHGSLDLVDAFEQPSTNSLTRIRSLQKCAAAIAELVHERGENGKHLEAFSIQLVILAIWNQALHICHTQAVSGIEGSLLQDINRVGRNISHGGSEKLLPQIQKEFVQEVERAEELAKFVESDNAKMPDAMEMILQAALALGISGGVDEVMGDAENAGNLYSKAVRLLVFLAVEAQTLILNPPLTLTNSVRYRLRTYIDSLITRLKHLQSHRRTSYPQKQ.

Residues 20-277 form the Protein kinase domain; that stretch reads YAVGRQIGSG…FEEFFHHPFL (258 aa). Residues 26–34 and lysine 49 contribute to the ATP site; that span reads IGSGSFSVV. Aspartate 142 functions as the Proton acceptor in the catalytic mechanism. Disordered stretches follow at residues 318-342 and 383-419; these read LPFF…TSPM and FEGH…SMDQ. Over residues 383-393 the composition is skewed to basic and acidic residues; that stretch reads FEGHRLSDRSQ. The span at 394-410 shows a compositional bias: polar residues; it reads FKPSSLPDSRSFSTQGR. The AIM (Atg8-family-interacting motif) motif lies at 421 to 424; it reads YVLI.

The protein belongs to the protein kinase superfamily. Ser/Thr protein kinase family.

Its subcellular location is the cytoplasmic vesicle. It localises to the autophagosome. Functionally, serine/threonine protein kinase involved in autophagy. The ATG1-ATG13 protein kinase complex regulates downstream events required for autophagosome enclosure and/or vacuolar delivery. The protein is Serine/threonine-protein kinase ATG1b of Arabidopsis thaliana (Mouse-ear cress).